The following is a 269-amino-acid chain: Phosphate import ATP-binding protein PstB (269 aa).

The ABC transporter domain maps to 21 to 264; it reads SEVRNLSFYY…PKNKQTEDYI (244 aa). An ATP-binding site is contributed by 53–60; that stretch reads GPSGCGKS.

It belongs to the ABC transporter superfamily. Phosphate importer (TC 3.A.1.7) family. As to quaternary structure, the complex is composed of two ATP-binding proteins (PstB), two transmembrane proteins (PstC and PstA) and a solute-binding protein (PstS).

It is found in the cell inner membrane. The catalysed reaction is phosphate(out) + ATP + H2O = ADP + 2 phosphate(in) + H(+). Part of the ABC transporter complex PstSACB involved in phosphate import. Responsible for energy coupling to the transport system. This Nitrosospira multiformis (strain ATCC 25196 / NCIMB 11849 / C 71) protein is Phosphate import ATP-binding protein PstB.